A 485-amino-acid chain; its full sequence is ATP synthase subunit beta 1 (485 aa).

Position 157–164 (157–164 (GGAGVGKT)) interacts with ATP.

It belongs to the ATPase alpha/beta chains family. As to quaternary structure, F-type ATPases have 2 components, CF(1) - the catalytic core - and CF(0) - the membrane proton channel. CF(1) has five subunits: alpha(3), beta(3), gamma(1), delta(1), epsilon(1). CF(0) has three main subunits: a(1), b(2) and c(9-12). The alpha and beta chains form an alternating ring which encloses part of the gamma chain. CF(1) is attached to CF(0) by a central stalk formed by the gamma and epsilon chains, while a peripheral stalk is formed by the delta and b chains.

The protein localises to the cell inner membrane. The catalysed reaction is ATP + H2O + 4 H(+)(in) = ADP + phosphate + 5 H(+)(out). Functionally, produces ATP from ADP in the presence of a proton gradient across the membrane. The catalytic sites are hosted primarily by the beta subunits. The polypeptide is ATP synthase subunit beta 1 (Psychromonas ingrahamii (strain DSM 17664 / CCUG 51855 / 37)).